A 101-amino-acid polypeptide reads, in one-letter code: uncharacterized protein (101 aa).

The helical transmembrane segment at 68–90 threads the bilayer; the sequence is LAFAFCGRANTFISCFISFASLI.

It localises to the membrane. This is an uncharacterized protein from Saccharomyces cerevisiae (strain ATCC 204508 / S288c) (Baker's yeast).